The primary structure comprises 387 residues: Protein phosphatase 2C 50 (387 aa).

The region spanning 60–377 (VWGCASTRGR…DNITVIVVDL (318 aa)) is the PPM-type phosphatase domain. 2 residues coordinate Mn(2+): Asp-118 and Gly-119. The Modulates binding affinity to PYR/PYL/RCAR abscisic acid intracellular receptors motif lies at 264 to 268 (VSGIL). 2 residues coordinate Mn(2+): Asp-306 and Asp-368.

It belongs to the PP2C family. Interacts with PYL3, PYL5, PYL9 and PYL10. Binding to PYL3, PYL5, PYL9 and PYL10 is dependent on the presence of abscisic acid (ABA). Interacts with SAPK10. Requires Mg(2+) as cofactor. It depends on Mn(2+) as a cofactor.

It catalyses the reaction O-phospho-L-seryl-[protein] + H2O = L-seryl-[protein] + phosphate. It carries out the reaction O-phospho-L-threonyl-[protein] + H2O = L-threonyl-[protein] + phosphate. In terms of biological role, protein phosphatase involved in abscisic acid (ABA) signaling. Together with PYL3 and SAPK10, may form an ABA signaling module involved in stress response. The sequence is that of Protein phosphatase 2C 50 from Oryza sativa subsp. japonica (Rice).